The chain runs to 259 residues: Protein odd-skipped-related 1 (259 aa).

3 consecutive C2H2-type zinc fingers follow at residues 168-190 (FVCK…ERTH), 196-218 (YTCD…RYIH), and 224-246 (FKCQ…KTLH).

Belongs to the Odd C2H2-type zinc-finger protein family. As to expression, at early gastrula stage, expressed in the involuting mesoderm and endoderm. During neurulation, expressed in the pronephric primordium, following expression of osr2. During tailbud (stage 35), expressed in the rectal diverticulum and in the kidney ducts.

Its subcellular location is the nucleus. Its function is as follows. Transcriptional repressor. Required for pronephric kidney development. This chain is Protein odd-skipped-related 1, found in Xenopus laevis (African clawed frog).